The primary structure comprises 217 residues: Chorionic somatomammotropin hormone 2 (217 aa).

An N-terminal signal peptide occupies residues Met-1 to Ala-26. His-44 provides a ligand contact to Zn(2+). The cysteines at positions 79 and 191 are disulfide-linked. Residue Glu-200 coordinates Zn(2+). Cys-208 and Cys-215 are disulfide-bonded.

Belongs to the somatotropin/prolactin family. As to quaternary structure, can be found in a monomeric as well as dimeric form.

The protein resides in the secreted. Functionally, produced only during pregnancy and is involved in stimulating lactation, fetal growth and metabolism. Does not interact with GHR but only activates PRLR through zinc-induced dimerization. This chain is Chorionic somatomammotropin hormone 2 (CSH2), found in Homo sapiens (Human).